Consider the following 81-residue polypeptide: Conotoxin Lt6.4 (81 aa).

Positions M1–G19 are cleaved as a signal peptide. Positions A20–P42 are excised as a propeptide. Cystine bridges form between C46-C60, C53-C65, and C59-C80.

Belongs to the conotoxin I3 superfamily. In terms of tissue distribution, expressed by the venom duct.

The protein localises to the secreted. The protein is Conotoxin Lt6.4 of Conus litteratus (Lettered cone).